Reading from the N-terminus, the 624-residue chain is Dihydroxy-acid dehydratase (624 aa).

Position 81 (Asp-81) interacts with Mg(2+). [2Fe-2S] cluster is bound at residue Cys-122. Residues Asp-123 and Lys-124 each contribute to the Mg(2+) site. Residue Lys-124 is modified to N6-carboxylysine. Cys-195 is a binding site for [2Fe-2S] cluster. Position 499 (Glu-499) interacts with Mg(2+). The Proton acceptor role is filled by Ser-525.

This sequence belongs to the IlvD/Edd family. As to quaternary structure, homodimer. It depends on [2Fe-2S] cluster as a cofactor. Mg(2+) serves as cofactor.

The enzyme catalyses (2R)-2,3-dihydroxy-3-methylbutanoate = 3-methyl-2-oxobutanoate + H2O. The catalysed reaction is (2R,3R)-2,3-dihydroxy-3-methylpentanoate = (S)-3-methyl-2-oxopentanoate + H2O. It participates in amino-acid biosynthesis; L-isoleucine biosynthesis; L-isoleucine from 2-oxobutanoate: step 3/4. Its pathway is amino-acid biosynthesis; L-valine biosynthesis; L-valine from pyruvate: step 3/4. Functions in the biosynthesis of branched-chain amino acids. Catalyzes the dehydration of (2R,3R)-2,3-dihydroxy-3-methylpentanoate (2,3-dihydroxy-3-methylvalerate) into 2-oxo-3-methylpentanoate (2-oxo-3-methylvalerate) and of (2R)-2,3-dihydroxy-3-methylbutanoate (2,3-dihydroxyisovalerate) into 2-oxo-3-methylbutanoate (2-oxoisovalerate), the penultimate precursor to L-isoleucine and L-valine, respectively. The polypeptide is Dihydroxy-acid dehydratase (Shewanella baltica (strain OS155 / ATCC BAA-1091)).